Reading from the N-terminus, the 307-residue chain is MTSKIKCALIGSGNIGTDLLYKLMRSDVLEPVWMVGIDPESDGLARAKAAGLKVTADGINGLLPFVEADEIKIAFDATSAYVHAENSRKLNELGVVMIDLTPAAIGPFCVPPVNLSQLDENVKNINMVTCGGQATIPMVAAVSRVQAVEYGEIVATVSSRSVGPGTRQNIDEFTRTTAGAVEQIGGAEKGKAIIVINPAEPPLLMRDTIHCLTKEQPDEQAITASVHEMIEQVQQYVPGYTLKNGPVFDGRKVTIFLEVEGLGDYLPKYAGNLDIMTAAAARTAEMLASKMLNPEPHYNVTQEAALA.

An NAD(+)-binding site is contributed by 12-15; that stretch reads SGNI. C130 functions as the Acyl-thioester intermediate in the catalytic mechanism. Residues 161 to 169 and N272 contribute to the NAD(+) site; that span reads SVGPGTRQN.

Belongs to the acetaldehyde dehydrogenase family.

It catalyses the reaction acetaldehyde + NAD(+) + CoA = acetyl-CoA + NADH + H(+). The chain is Acetaldehyde dehydrogenase from Shewanella halifaxensis (strain HAW-EB4).